The chain runs to 28 residues: Dermaseptin-6TR (28 aa).

Expressed by the skin glands.

The protein resides in the secreted. Its function is as follows. Has antimicrobial activity. This chain is Dermaseptin-6TR, found in Phyllomedusa trinitatis (Trinidad leaf frog).